The following is a 179-amino-acid chain: IMPACT family member in pol 5'region (179 aa).

The protein belongs to the IMPACT family.

This Thermus thermophilus protein is IMPACT family member in pol 5'region.